The chain runs to 398 residues: 1-deoxy-D-xylulose 5-phosphate reductoisomerase (398 aa).

NADPH is bound by residues Thr-10, Gly-11, Ser-12, Ile-13, Gly-36, Asn-38, and Asn-124. Lys-125 provides a ligand contact to 1-deoxy-D-xylulose 5-phosphate. Residue Glu-126 coordinates NADPH. Asp-150 lines the Mn(2+) pocket. 1-deoxy-D-xylulose 5-phosphate is bound by residues Ser-151, Glu-152, Ser-186, and His-209. Glu-152 lines the Mn(2+) pocket. Gly-215 serves as a coordination point for NADPH. Residues Ser-222, Asn-227, Lys-228, and Glu-231 each contribute to the 1-deoxy-D-xylulose 5-phosphate site. Glu-231 contributes to the Mn(2+) binding site.

The protein belongs to the DXR family. In terms of assembly, homodimer. Mg(2+) is required as a cofactor. The cofactor is Mn(2+).

The catalysed reaction is 2-C-methyl-D-erythritol 4-phosphate + NADP(+) = 1-deoxy-D-xylulose 5-phosphate + NADPH + H(+). It participates in isoprenoid biosynthesis; isopentenyl diphosphate biosynthesis via DXP pathway; isopentenyl diphosphate from 1-deoxy-D-xylulose 5-phosphate: step 1/6. Catalyzes the NADPH-dependent rearrangement and reduction of 1-deoxy-D-xylulose-5-phosphate (DXP) to 2-C-methyl-D-erythritol 4-phosphate (MEP). This chain is 1-deoxy-D-xylulose 5-phosphate reductoisomerase, found in Pectobacterium atrosepticum (strain SCRI 1043 / ATCC BAA-672) (Erwinia carotovora subsp. atroseptica).